A 239-amino-acid chain; its full sequence is Ribonuclease HII (239 aa).

One can recognise an RNase H type-2 domain in the interval 18–231 (KIIVGLDEAG…SKNLLKEIEE (214 aa)). Residues aspartate 24, glutamate 25, and aspartate 125 each coordinate a divalent metal cation.

It belongs to the RNase HII family. The cofactor is Mn(2+). Mg(2+) serves as cofactor.

The protein localises to the cytoplasm. The catalysed reaction is Endonucleolytic cleavage to 5'-phosphomonoester.. Functionally, endonuclease that specifically degrades the RNA of RNA-DNA hybrids. The chain is Ribonuclease HII from Methanococcus maripaludis (strain C5 / ATCC BAA-1333).